We begin with the raw amino-acid sequence, 258 residues long: PHD finger protein ALFIN-LIKE 5 (258 aa).

Residues 143 to 205 form a disordered region; it reads AKKQTKEKAP…EEEERDNTLC (63 aa). The segment covering 152-165 has biased composition (polar residues); sequence PNSTNKPNKPSSKM. Positions 184–200 are enriched in acidic residues; it reads DDDESGDEYADEEEEER. The segment at 202–254 adopts a PHD-type zinc-finger fold; that stretch reads NTLCGSCGTNDGKDEFWICCDSCERWYHGKCVKITPARAEHIKHYKCPDCGNK.

This sequence belongs to the Alfin family.

The protein localises to the nucleus. Functionally, histone-binding component that specifically recognizes H3 tails trimethylated on 'Lys-4' (H3K4me3), which mark transcription start sites of virtually all active genes. The protein is PHD finger protein ALFIN-LIKE 5 of Oryza sativa subsp. indica (Rice).